Reading from the N-terminus, the 693-residue chain is eEF1A lysine and N-terminal methyltransferase (693 aa).

This sequence belongs to the methyltransferase superfamily.

It carries out the reaction L-lysyl-[protein] + S-adenosyl-L-methionine = N(6)-methyl-L-lysyl-[protein] + S-adenosyl-L-homocysteine + H(+). It catalyses the reaction N(6)-methyl-L-lysyl-[protein] + S-adenosyl-L-methionine = N(6),N(6)-dimethyl-L-lysyl-[protein] + S-adenosyl-L-homocysteine + H(+). The catalysed reaction is N-terminal glycyl-L-lysyl-L-glutamyl-[protein] + 3 S-adenosyl-L-methionine = N-terminal N,N,N-trimethyl-glycyl-L-lysyl-L-glutamyl-[protein] + 3 S-adenosyl-L-homocysteine + 3 H(+). Functionally, dual methyltransferase that catalyzes methylation of elongation factor 1-alpha (eef1a1 and eef1a2) at two different positions, and is therefore involved in the regulation of mRNA translation. Via its C-terminus, methylates the N-terminus of eef1a1 and eef1a2. Via its N-terminus dimethylates lysine residues of eef1a1 and eef1a2. This Xenopus laevis (African clawed frog) protein is eEF1A lysine and N-terminal methyltransferase (mettl13).